A 309-amino-acid polypeptide reads, in one-letter code: Homoserine O-succinyltransferase (309 aa).

Residue C142 is the Acyl-thioester intermediate of the active site. K163 and S192 together coordinate substrate. The Proton acceptor role is filled by H235. Residue E237 is part of the active site. Substrate is bound at residue R249.

Belongs to the MetA family.

The protein localises to the cytoplasm. The enzyme catalyses L-homoserine + succinyl-CoA = O-succinyl-L-homoserine + CoA. It participates in amino-acid biosynthesis; L-methionine biosynthesis via de novo pathway; O-succinyl-L-homoserine from L-homoserine: step 1/1. Functionally, transfers a succinyl group from succinyl-CoA to L-homoserine, forming succinyl-L-homoserine. In Cronobacter sakazakii (strain ATCC BAA-894) (Enterobacter sakazakii), this protein is Homoserine O-succinyltransferase.